Consider the following 968-residue polypeptide: RNA polymerase-associated protein RapA (968 aa).

Residues 164–334 (EVGQRHAPRV…FARLRLLDPD (171 aa)) enclose the Helicase ATP-binding domain. 177–184 (DEVGLGKT) provides a ligand contact to ATP. A DEAH box motif is present at residues 280–283 (DEAH). One can recognise a Helicase C-terminal domain in the interval 490–644 (RVEWLLNYLV…TCPTGRTIYD (155 aa)).

The protein belongs to the SNF2/RAD54 helicase family. RapA subfamily. Interacts with the RNAP. Has a higher affinity for the core RNAP than for the holoenzyme. Its ATPase activity is stimulated by binding to RNAP.

In terms of biological role, transcription regulator that activates transcription by stimulating RNA polymerase (RNAP) recycling in case of stress conditions such as supercoiled DNA or high salt concentrations. Probably acts by releasing the RNAP, when it is trapped or immobilized on tightly supercoiled DNA. Does not activate transcription on linear DNA. Probably not involved in DNA repair. The protein is RNA polymerase-associated protein RapA of Yersinia pestis bv. Antiqua (strain Antiqua).